The chain runs to 250 residues: L-ascorbate peroxidase 1, cytosolic (250 aa).

His42 acts as the Proton acceptor in catalysis. The tract at residues 113–137 (VPFHPGREDKPAPPPEGRLPDATKG) is disordered. Heme b is bound at residue His163. Thr164, Thr180, Asn182, and Asp187 together coordinate K(+).

Belongs to the peroxidase family. Ascorbate peroxidase subfamily. It depends on heme b as a cofactor. In terms of tissue distribution, expressed in roots, aerial vegetative parts and reproductive organs. Expressed in roots, leaves, stems and flowers.

The protein resides in the cytoplasm. It carries out the reaction L-ascorbate + H2O2 = L-dehydroascorbate + 2 H2O. Its activity is regulated as follows. Inhibited by p-chloromercuriphenylsulfonic acid (CMPSA). Its function is as follows. Plays a key role in hydrogen peroxide removal. The sequence is that of L-ascorbate peroxidase 1, cytosolic from Oryza sativa subsp. japonica (Rice).